The following is a 475-amino-acid chain: Protein nucleotidyltransferase YdiU (475 aa).

ATP is bound by residues glycine 82, glycine 84, arginine 85, lysine 105, aspartate 117, glycine 118, arginine 168, and arginine 175. The active-site Proton acceptor is the aspartate 240. 2 residues coordinate Mg(2+): asparagine 241 and aspartate 250. Aspartate 250 is an ATP binding site.

It belongs to the SELO family. Mg(2+) serves as cofactor. It depends on Mn(2+) as a cofactor.

It carries out the reaction L-seryl-[protein] + ATP = 3-O-(5'-adenylyl)-L-seryl-[protein] + diphosphate. The catalysed reaction is L-threonyl-[protein] + ATP = 3-O-(5'-adenylyl)-L-threonyl-[protein] + diphosphate. It catalyses the reaction L-tyrosyl-[protein] + ATP = O-(5'-adenylyl)-L-tyrosyl-[protein] + diphosphate. The enzyme catalyses L-histidyl-[protein] + UTP = N(tele)-(5'-uridylyl)-L-histidyl-[protein] + diphosphate. It carries out the reaction L-seryl-[protein] + UTP = O-(5'-uridylyl)-L-seryl-[protein] + diphosphate. The catalysed reaction is L-tyrosyl-[protein] + UTP = O-(5'-uridylyl)-L-tyrosyl-[protein] + diphosphate. Functionally, nucleotidyltransferase involved in the post-translational modification of proteins. It can catalyze the addition of adenosine monophosphate (AMP) or uridine monophosphate (UMP) to a protein, resulting in modifications known as AMPylation and UMPylation. The polypeptide is Protein nucleotidyltransferase YdiU (Aeromonas salmonicida (strain A449)).